Here is a 1039-residue protein sequence, read N- to C-terminus: Antigen 43 (1039 aa).

Positions 1 to 52 (MKRHLNTCYRLVWNHMTGAFVVASELARARGKRGGVAVALSLAAVTSLPVLA) are cleaved as a signal peptide. Residues 737–1039 (VNGENNSVRL…NGQATLNVTF (303 aa)) enclose the Autotransporter domain.

In terms of assembly, interaction with TamA of the translocation and assembly module (TAM) initiates insertion in the outer membrane.

It is found in the periplasm. The protein resides in the secreted. It localises to the cell surface. Its subcellular location is the cell outer membrane. Controls colony form variation and autoaggregation. May function as an adhesin. The polypeptide is Antigen 43 (flu) (Escherichia coli (strain K12)).